Consider the following 37-residue polypeptide: Pi-theraphotoxin-Hm3a (37 aa).

3 cysteine pairs are disulfide-bonded: Cys-3–Cys-18, Cys-10–Cys-23, and Cys-17–Cys-33.

This sequence belongs to the psalmotoxin-1 family. Expressed by the venom gland.

Its subcellular location is the secreted. This toxin acts on different isoforms of acid-sensing ion channel ASIC1 in a similar manner to psalmotoxin-1 (AC P60514). On ASIC1a homotrimer, it provokes a pH-dependent inhibition (IC(50)=39.7 nM on human and IC(50)=1.3 nM on rat channels), whereas it potentiates ASIC1b homotrimer and ASIC1a-ASIC1b heterotrimer (EC(50)=178.1 nM on human ASIC1b, EC(50)=46.5 nM on rat ASIC1b and EC(50)=17.4 nM on rat ASIC1a-ASIC1b channels). On rat ASIC1a, it acts by inhibiting channel currents by shifting the pH of half-maximal effect (pH(50)) of steady-state desensitization and activation to more alkaline values. The sequence is that of Pi-theraphotoxin-Hm3a from Heteroscodra maculata (Togo starburst tarantula).